We begin with the raw amino-acid sequence, 169 residues long: Large ribosomal subunit protein uL23 (169 aa).

The disordered stretch occupies residues 1 to 20; that stretch reads MAGKKVKSNTPKQDLSVSKS. Residues 8–20 are compositionally biased toward polar residues; that stretch reads SNTPKQDLSVSKS.

It belongs to the universal ribosomal protein uL23 family.

Functionally, this protein binds to a specific region on the 26S rRNA. This chain is Large ribosomal subunit protein uL23 (rpl23a), found in Dictyostelium discoideum (Social amoeba).